A 103-amino-acid chain; its full sequence is UPF0235 protein RL4503 (103 aa).

It belongs to the UPF0235 family.

This Rhizobium johnstonii (strain DSM 114642 / LMG 32736 / 3841) (Rhizobium leguminosarum bv. viciae) protein is UPF0235 protein RL4503.